A 100-amino-acid polypeptide reads, in one-letter code: Large ribosomal subunit protein uL23 (100 aa).

It belongs to the universal ribosomal protein uL23 family. As to quaternary structure, part of the 50S ribosomal subunit. Contacts protein L29, and trigger factor when it is bound to the ribosome.

One of the early assembly proteins it binds 23S rRNA. One of the proteins that surrounds the polypeptide exit tunnel on the outside of the ribosome. Forms the main docking site for trigger factor binding to the ribosome. The protein is Large ribosomal subunit protein uL23 of Shewanella oneidensis (strain ATCC 700550 / JCM 31522 / CIP 106686 / LMG 19005 / NCIMB 14063 / MR-1).